A 135-amino-acid chain; its full sequence is ATP synthase epsilon chain (135 aa).

The disordered stretch occupies residues 101 to 122; that stretch reads TAVTKLEGQPSTPEKVKAQQLF.

Belongs to the ATPase epsilon chain family. In terms of assembly, F-type ATPases have 2 components, CF(1) - the catalytic core - and CF(0) - the membrane proton channel. CF(1) has five subunits: alpha(3), beta(3), gamma(1), delta(1), epsilon(1). CF(0) has three main subunits: a, b and c.

It is found in the cellular thylakoid membrane. Functionally, produces ATP from ADP in the presence of a proton gradient across the membrane. This is ATP synthase epsilon chain from Synechococcus sp. (strain CC9311).